A 434-amino-acid polypeptide reads, in one-letter code: Probable zinc metalloprotease PTRG_04772 (434 aa).

Residue Asn88 is glycosylated (N-linked (GlcNAc...) asparagine). Positions 111, 131, and 164 each coordinate Zn(2+). N-linked (GlcNAc...) asparagine glycosylation is present at Asn179. Asp191 contacts Zn(2+). N-linked (GlcNAc...) asparagine glycosylation is found at Asn220, Asn299, Asn347, Asn353, Asn390, and Asn395. Positions 340–433 (SPTNVGINTT…LPFPFGCARN (94 aa)) constitute a Fibronectin type-III domain.

The protein belongs to the peptidase M28 family. M28B subfamily. It depends on Zn(2+) as a cofactor.

It is found in the secreted. The sequence is that of Probable zinc metalloprotease PTRG_04772 from Pyrenophora tritici-repentis (strain Pt-1C-BFP) (Wheat tan spot fungus).